Reading from the N-terminus, the 475-residue chain is Aspartyl/glutamyl-tRNA(Asn/Gln) amidotransferase subunit B (475 aa).

Belongs to the GatB/GatE family. GatB subfamily. As to quaternary structure, heterotrimer of A, B and C subunits.

It catalyses the reaction L-glutamyl-tRNA(Gln) + L-glutamine + ATP + H2O = L-glutaminyl-tRNA(Gln) + L-glutamate + ADP + phosphate + H(+). The catalysed reaction is L-aspartyl-tRNA(Asn) + L-glutamine + ATP + H2O = L-asparaginyl-tRNA(Asn) + L-glutamate + ADP + phosphate + 2 H(+). Its function is as follows. Allows the formation of correctly charged Asn-tRNA(Asn) or Gln-tRNA(Gln) through the transamidation of misacylated Asp-tRNA(Asn) or Glu-tRNA(Gln) in organisms which lack either or both of asparaginyl-tRNA or glutaminyl-tRNA synthetases. The reaction takes place in the presence of glutamine and ATP through an activated phospho-Asp-tRNA(Asn) or phospho-Glu-tRNA(Gln). This chain is Aspartyl/glutamyl-tRNA(Asn/Gln) amidotransferase subunit B, found in Bacillus anthracis (strain A0248).